Reading from the N-terminus, the 396-residue chain is MWNSSDANFSCYHESVLGYRYFAVIWGVAVAVTGTVGNVLTLLALAIRPKLRTRFNLLIANLTLADLLYCTLLQPFSVDTYLHLHWRTGAVFCRIFGLLLFTSNSVSILTLCLIALGRYLLIAHPKLFPQVFSAKGIVLALVGSWVVGVTSFAPLWNVFVLVPVVCTCSFDRMRGRPYTTILMGIYFVLGLSSVGVFYCLIHRQVKRAARALDQYGLHQASIRSHQVAGTQEAMPGHFQELDSGVASRGPSEGISSEPVSAATTQTLEGDSSEAGGQGIRKAAQQIAERSLPEVHRKPRETAGARRATDAPSEFGKVTRMCFAVFLCFALSYIPFLLLNILDARGRAPRVVHMVAANLTWLNSCINPVLYAAMNRQFRHAYGSILKRGPQSFRRFH.

At 1 to 21 (MWNSSDANFSCYHESVLGYRY) the chain is on the extracellular side. N-linked (GlcNAc...) asparagine glycosylation is found at N3 and N8. The helical transmembrane segment at 22–42 (FAVIWGVAVAVTGTVGNVLTL) threads the bilayer. The Cytoplasmic portion of the chain corresponds to 43–57 (LALAIRPKLRTRFNL). Residues 58 to 78 (LIANLTLADLLYCTLLQPFSV) traverse the membrane as a helical segment. Over 79–94 (DTYLHLHWRTGAVFCR) the chain is Extracellular. The chain crosses the membrane as a helical span at residues 95-115 (IFGLLLFTSNSVSILTLCLIA). Residues 116 to 135 (LGRYLLIAHPKLFPQVFSAK) are Cytoplasmic-facing. Residues 136–156 (GIVLALVGSWVVGVTSFAPLW) traverse the membrane as a helical segment. At 157 to 180 (NVFVLVPVVCTCSFDRMRGRPYTT) the chain is on the extracellular side. The helical transmembrane segment at 181 to 201 (ILMGIYFVLGLSSVGVFYCLI) threads the bilayer. Topologically, residues 202–320 (HRQVKRAARA…PSEFGKVTRM (119 aa)) are cytoplasmic. 2 positions are modified to phosphoserine: S221 and S224. Positions 241-310 (LDSGVASRGP…TAGARRATDA (70 aa)) are disordered. Over residues 253-269 (GISSEPVSAATTQTLEG) the composition is skewed to polar residues. Phosphothreonine occurs at positions 263 and 264. Residues 290-308 (SLPEVHRKPRETAGARRAT) show a composition bias toward basic and acidic residues. The helical transmembrane segment at 321-341 (CFAVFLCFALSYIPFLLLNIL) threads the bilayer. The Extracellular portion of the chain corresponds to 342–352 (DARGRAPRVVH). The chain crosses the membrane as a helical span at residues 353 to 373 (MVAANLTWLNSCINPVLYAAM). At 374–396 (NRQFRHAYGSILKRGPQSFRRFH) the chain is on the cytoplasmic side.

The protein belongs to the G-protein coupled receptor 1 family. As to quaternary structure, interacts with ARRB2 and ARR3. Post-translationally, phosphorylated by a subset of GPR84-activating ligands. Constitutively phosphorylated at Ser-221 and Ser-224 in the absence of 2-HTP. By contrast, Thr-263 and Thr-264 are phosphorylated only following prior cell treatment with 2-HTP. Expressed predominantly in hematopoietic tissues. Expressed mainly in the bone marrow with transcripts also detected in spleen, the lymph node, liver and the lung.

The protein resides in the cell membrane. Its function is as follows. G protein-coupled receptor that responds endogenously to dietary fatty acids or nutrient, specifically medium-chain free fatty acid (FFA) with carbon chain lengths of C9 to C14. Capric acid (C10:0), undecanoic acid (C11:0) and lauric acid (C12:0) are the most potent agonists. In immune cells, functions as a pro-inflammatory receptor via 6-OAU and promotes the expression of pro-inflammatory mediators such as TNFalpha, IL-6 and IL-12B as well as stimulating chemotactic responses through activation of signaling mediators AKT, ERK and NF-kappa-B (by sim). In addition, triggers increased bacterial adhesion and phagocytosis in macrophages and regulates pro-inflammatory function via enhancing NLRP3 inflammasome activation. Also plays an important role in inflammation by modulating neutrophil functions. Mechanistically, promotes neutrophil chemotaxis, reactive oxygen species (ROS) production and degranulation via LYN-AKT/ERK pathway. To regulate ROS production, communicates with the two formyl peptide receptors FPR2 and FPR1 to control the NADPH oxidase activity in neutrophils. In Mus musculus (Mouse), this protein is G-protein coupled receptor 84 (Gpr84).